The primary structure comprises 207 residues: Urease accessory protein UreG (207 aa).

A GTP-binding site is contributed by 14–21; that stretch reads GPVGSGKT.

Belongs to the SIMIBI class G3E GTPase family. UreG subfamily. Homodimer. UreD, UreF and UreG form a complex that acts as a GTP-hydrolysis-dependent molecular chaperone, activating the urease apoprotein by helping to assemble the nickel containing metallocenter of UreC. The UreE protein probably delivers the nickel.

The protein resides in the cytoplasm. Functionally, facilitates the functional incorporation of the urease nickel metallocenter. This process requires GTP hydrolysis, probably effectuated by UreG. This Tolumonas auensis (strain DSM 9187 / NBRC 110442 / TA 4) protein is Urease accessory protein UreG.